A 412-amino-acid chain; its full sequence is Probable tRNA sulfurtransferase (412 aa).

Residues 58-163 (DEVIKQLGYV…SEGTYIYVGK (106 aa)) enclose the THUMP domain. ATP-binding positions include 181 to 182 (ML), 206 to 207 (HF), R265, G287, and Q296.

It belongs to the ThiI family.

It localises to the cytoplasm. The enzyme catalyses [ThiI sulfur-carrier protein]-S-sulfanyl-L-cysteine + a uridine in tRNA + 2 reduced [2Fe-2S]-[ferredoxin] + ATP + H(+) = [ThiI sulfur-carrier protein]-L-cysteine + a 4-thiouridine in tRNA + 2 oxidized [2Fe-2S]-[ferredoxin] + AMP + diphosphate. The catalysed reaction is [ThiS sulfur-carrier protein]-C-terminal Gly-Gly-AMP + S-sulfanyl-L-cysteinyl-[cysteine desulfurase] + AH2 = [ThiS sulfur-carrier protein]-C-terminal-Gly-aminoethanethioate + L-cysteinyl-[cysteine desulfurase] + A + AMP + 2 H(+). It participates in cofactor biosynthesis; thiamine diphosphate biosynthesis. Catalyzes the ATP-dependent transfer of a sulfur to tRNA to produce 4-thiouridine in position 8 of tRNAs, which functions as a near-UV photosensor. Also catalyzes the transfer of sulfur to the sulfur carrier protein ThiS, forming ThiS-thiocarboxylate. This is a step in the synthesis of thiazole, in the thiamine biosynthesis pathway. The sulfur is donated as persulfide by IscS. This is Probable tRNA sulfurtransferase from Acholeplasma laidlawii (strain PG-8A).